The following is a 223-amino-acid chain: Deoxyribose-phosphate aldolase (223 aa).

Residue D91 is the Proton donor/acceptor of the active site. The Schiff-base intermediate with acetaldehyde role is filled by K154. Catalysis depends on K183, which acts as the Proton donor/acceptor.

Belongs to the DeoC/FbaB aldolase family. DeoC type 1 subfamily.

The protein resides in the cytoplasm. The catalysed reaction is 2-deoxy-D-ribose 5-phosphate = D-glyceraldehyde 3-phosphate + acetaldehyde. It participates in carbohydrate degradation; 2-deoxy-D-ribose 1-phosphate degradation; D-glyceraldehyde 3-phosphate and acetaldehyde from 2-deoxy-alpha-D-ribose 1-phosphate: step 2/2. Functionally, catalyzes a reversible aldol reaction between acetaldehyde and D-glyceraldehyde 3-phosphate to generate 2-deoxy-D-ribose 5-phosphate. This chain is Deoxyribose-phosphate aldolase, found in Geobacillus sp. (strain WCH70).